The primary structure comprises 609 residues: Glutamine--fructose-6-phosphate aminotransferase [isomerizing] (609 aa).

Catalysis depends on Cys-2, which acts as the Nucleophile; for GATase activity. Residues Cys-2–Arg-218 enclose the Glutamine amidotransferase type-2 domain. SIS domains follow at residues Ala-286 to Leu-426 and Leu-458 to Pro-599. The active-site For Fru-6P isomerization activity is Lys-604.

In terms of assembly, homodimer.

The protein resides in the cytoplasm. It carries out the reaction D-fructose 6-phosphate + L-glutamine = D-glucosamine 6-phosphate + L-glutamate. Functionally, catalyzes the first step in hexosamine metabolism, converting fructose-6P into glucosamine-6P using glutamine as a nitrogen source. This chain is Glutamine--fructose-6-phosphate aminotransferase [isomerizing], found in Salmonella paratyphi A (strain ATCC 9150 / SARB42).